The primary structure comprises 109 residues: EPIDERMAL PATTERNING FACTOR-like protein 4 (109 aa).

Residues 1–26 form the signal peptide; the sequence is MGTFRRRRRFLLAALVTFALLHLFSA. Cystine bridges form between Cys-66-Cys-100, Cys-70-Cys-76, and Cys-73-Cys-102.

The protein belongs to the plant cysteine rich small secretory peptide family. Epidermal patterning factor subfamily. Interacts with ERECTA. Expressed at the base of the apical meristem at 3 days after germination. Not detected in the hypocotyl. Expressed in developing stems soon after bolting, in inflorescence stems and in young siliques.

The protein localises to the secreted. In terms of biological role, acts primarily as positive regulator of inflorescence growth. Endodermal expression is sufficient for proper inflorescence architecture. Redundantly involved with EPFL6 in procambial development regulation. Controls stomatal patterning. Mediates stomatal development inhibition. TMM (AC Q9SSD1) functions to dampen or block CLL2 signaling. Acts as a growth-regulatory ligand for ERECTA family receptors. This is EPIDERMAL PATTERNING FACTOR-like protein 4 from Arabidopsis thaliana (Mouse-ear cress).